An 875-amino-acid chain; its full sequence is Alanine--tRNA ligase (875 aa).

4 residues coordinate Zn(2+): His596, His600, Cys700, and His704.

Belongs to the class-II aminoacyl-tRNA synthetase family. It depends on Zn(2+) as a cofactor.

The protein resides in the cytoplasm. It catalyses the reaction tRNA(Ala) + L-alanine + ATP = L-alanyl-tRNA(Ala) + AMP + diphosphate. In terms of biological role, catalyzes the attachment of alanine to tRNA(Ala) in a two-step reaction: alanine is first activated by ATP to form Ala-AMP and then transferred to the acceptor end of tRNA(Ala). Also edits incorrectly charged Ser-tRNA(Ala) and Gly-tRNA(Ala) via its editing domain. In Methanocella arvoryzae (strain DSM 22066 / NBRC 105507 / MRE50), this protein is Alanine--tRNA ligase.